Consider the following 22-residue polypeptide: Chlorate reductase subunit gamma (22 aa).

The interval 1–22 is disordered; it reads EXSEQNPNILEIKPGDTVKVXT.

As to quaternary structure, heterotrimer of alpha, beta and gamma subunits. Heme b is required as a cofactor.

It is found in the cytoplasm. Its function is as follows. May transfer electrons to the iron-sulfur centers of the beta subunit of chlorate reductase. The polypeptide is Chlorate reductase subunit gamma (Stutzerimonas chloritidismutans (Pseudomonas chloritidismutans)).